Consider the following 737-residue polypeptide: Phosphoribosylformylglycinamidine synthase subunit PurL (737 aa).

The active site involves His50. ATP contacts are provided by Tyr53 and Lys92. Residue Glu94 participates in Mg(2+) binding. Residues 95–98 (SHNH) and Arg117 contribute to the substrate site. His96 acts as the Proton acceptor in catalysis. Position 118 (Asp118) interacts with Mg(2+). Gln241 contacts substrate. Residue Asp269 coordinates Mg(2+). 313 to 315 (ESQ) contacts substrate. 2 residues coordinate ATP: Asp494 and Gly531. Residue Asn532 coordinates Mg(2+). Substrate is bound at residue Ser534.

Belongs to the FGAMS family. In terms of assembly, monomer. Part of the FGAM synthase complex composed of 1 PurL, 1 PurQ and 2 PurS subunits.

Its subcellular location is the cytoplasm. The enzyme catalyses N(2)-formyl-N(1)-(5-phospho-beta-D-ribosyl)glycinamide + L-glutamine + ATP + H2O = 2-formamido-N(1)-(5-O-phospho-beta-D-ribosyl)acetamidine + L-glutamate + ADP + phosphate + H(+). The protein operates within purine metabolism; IMP biosynthesis via de novo pathway; 5-amino-1-(5-phospho-D-ribosyl)imidazole from N(2)-formyl-N(1)-(5-phospho-D-ribosyl)glycinamide: step 1/2. Functionally, part of the phosphoribosylformylglycinamidine synthase complex involved in the purines biosynthetic pathway. Catalyzes the ATP-dependent conversion of formylglycinamide ribonucleotide (FGAR) and glutamine to yield formylglycinamidine ribonucleotide (FGAM) and glutamate. The FGAM synthase complex is composed of three subunits. PurQ produces an ammonia molecule by converting glutamine to glutamate. PurL transfers the ammonia molecule to FGAR to form FGAM in an ATP-dependent manner. PurS interacts with PurQ and PurL and is thought to assist in the transfer of the ammonia molecule from PurQ to PurL. The protein is Phosphoribosylformylglycinamidine synthase subunit PurL of Rhodopseudomonas palustris (strain BisA53).